Consider the following 186-residue polypeptide: uncharacterized protein (186 aa).

The disordered stretch occupies residues threonine 121–glutamate 146.

This sequence belongs to the chlamydial CPn_0422/CT_273/TC_0545 family.

This is an uncharacterized protein from Chlamydia muridarum (strain MoPn / Nigg).